We begin with the raw amino-acid sequence, 38 residues long: Humanin-like protein (38 aa).

As to expression, in the testis, expressed in Leydig cells at 10, 20 and 60 days of age (at protein level). Also expressed in pachytene spermatocytes at day 20 and in vessels, peritubular cells and spermatids at day 60. Not detected in Sertoli cells (at protein level). In the adult ovary, expressed in stromal cells, granulosa cells, theca cells and oocytes at diestrus and proestrus (at protein level). Expressed in the anterior pituitary where it is detected in lactotropes and somatotropes with lower levels in females than males (at protein level). In the hippocampus, expressed in astrocytes but not in neurons or oligodendrocytes (at protein level). Expressed in muscle, liver and hypothalamus but not in epididymal fat (at protein level). Widely expressed with highest levels in cardiac and skeletal muscle and lowest levels in lung, testis and uterus. In the CNS, levels are relatively high in the cerebellum and cortex and low in the hippocampus. In the hippocampus, lower levels are detected in ovariectomized animals than in controls.

The protein resides in the mitochondrion. It is found in the secreted. Its subcellular location is the cytoplasm. Its function is as follows. Plays a role as a neuroprotective factor. Protects against neuronal cell death induced by amyloid-beta peptides. Also protects against excitotoxic cell death. Prevents amyloid-beta peptide-induced spatial learning and memory impairments, protects against amyloid-beta peptide-induced suppression of hippocampal long-term potentiation, and inhibits amyloid-beta peptide-induced activation of STAT3 and inhibition of CASP3. Prevents glutamate-induced dendritic atrophy in hippocampal neurons and also prevents glutamate-induced decrease in SYP puncta number and total puncta area. Protects anterior pituitary cells from TNF-induced apoptosis. Plays a role in ovarian follicle development by acting as a cryoprotective factor for granulosa cells in the antral follicle. Increases androgen production in Leydig cells and promotes Leydig cell survival by preventing apoptosis. The polypeptide is Humanin-like protein (Rattus norvegicus (Rat)).